The sequence spans 85 residues: Small ribosomal subunit protein bS20 (85 aa).

Belongs to the bacterial ribosomal protein bS20 family.

Its function is as follows. Binds directly to 16S ribosomal RNA. The chain is Small ribosomal subunit protein bS20 from Borrelia garinii subsp. bavariensis (strain ATCC BAA-2496 / DSM 23469 / PBi) (Borreliella bavariensis).